The chain runs to 306 residues: Lipoyl synthase (306 aa).

Residues Cys-55, Cys-60, Cys-66, Cys-81, Cys-85, Cys-88, and Ser-294 each coordinate [4Fe-4S] cluster. In terms of domain architecture, Radical SAM core spans Trp-67–Thr-283.

The protein belongs to the radical SAM superfamily. Lipoyl synthase family. Requires [4Fe-4S] cluster as cofactor.

It is found in the cytoplasm. The catalysed reaction is [[Fe-S] cluster scaffold protein carrying a second [4Fe-4S](2+) cluster] + N(6)-octanoyl-L-lysyl-[protein] + 2 oxidized [2Fe-2S]-[ferredoxin] + 2 S-adenosyl-L-methionine + 4 H(+) = [[Fe-S] cluster scaffold protein] + N(6)-[(R)-dihydrolipoyl]-L-lysyl-[protein] + 4 Fe(3+) + 2 hydrogen sulfide + 2 5'-deoxyadenosine + 2 L-methionine + 2 reduced [2Fe-2S]-[ferredoxin]. It participates in protein modification; protein lipoylation via endogenous pathway; protein N(6)-(lipoyl)lysine from octanoyl-[acyl-carrier-protein]: step 2/2. In terms of biological role, catalyzes the radical-mediated insertion of two sulfur atoms into the C-6 and C-8 positions of the octanoyl moiety bound to the lipoyl domains of lipoate-dependent enzymes, thereby converting the octanoylated domains into lipoylated derivatives. The polypeptide is Lipoyl synthase (Chloroflexus aurantiacus (strain ATCC 29364 / DSM 637 / Y-400-fl)).